Here is a 636-residue protein sequence, read N- to C-terminus: Probable Xaa-Pro aminopeptidase P (636 aa).

Residues aspartate 414, aspartate 425, glutamate 523, and glutamate 537 each contribute to the Mn(2+) site.

The protein belongs to the peptidase M24B family. Mn(2+) serves as cofactor.

The catalysed reaction is Release of any N-terminal amino acid, including proline, that is linked to proline, even from a dipeptide or tripeptide.. In terms of biological role, catalyzes the removal of a penultimate prolyl residue from the N-termini of peptides. In Ajellomyces capsulatus (strain H143) (Darling's disease fungus), this protein is Probable Xaa-Pro aminopeptidase P (AMPP).